We begin with the raw amino-acid sequence, 211 residues long: Nucleoside triphosphate pyrophosphatase (211 aa).

Asp-76 functions as the Proton acceptor in the catalytic mechanism.

It belongs to the Maf family. The cofactor is a divalent metal cation.

Its subcellular location is the cytoplasm. It catalyses the reaction a ribonucleoside 5'-triphosphate + H2O = a ribonucleoside 5'-phosphate + diphosphate + H(+). The enzyme catalyses a 2'-deoxyribonucleoside 5'-triphosphate + H2O = a 2'-deoxyribonucleoside 5'-phosphate + diphosphate + H(+). In terms of biological role, nucleoside triphosphate pyrophosphatase. May have a dual role in cell division arrest and in preventing the incorporation of modified nucleotides into cellular nucleic acids. This Saccharopolyspora erythraea (strain ATCC 11635 / DSM 40517 / JCM 4748 / NBRC 13426 / NCIMB 8594 / NRRL 2338) protein is Nucleoside triphosphate pyrophosphatase.